Reading from the N-terminus, the 301-residue chain is Protoheme IX farnesyltransferase (301 aa).

8 helical membrane-spanning segments follow: residues 30 to 50, 55 to 75, 106 to 126, 127 to 147, 152 to 172, 177 to 197, 233 to 253, and 281 to 301; these read VISLLDLAAIAGFVLGLPKAI, IIVSFLAVIIGGSLASGGGMI, AYAIGSIFIVVGTLIGFLANP, LTALFIALGAFIYVVIYSIWL, WWNIVIGGFAGSAAAWAGFAA, FTLLSFLLGFLIFMWTPGHFW, ALMVPFALLIGLYAGLIYLIV, and FKLSSPYLAIILLTLIIVKLI.

This sequence belongs to the UbiA prenyltransferase family. Protoheme IX farnesyltransferase subfamily.

It localises to the cell membrane. The catalysed reaction is heme b + (2E,6E)-farnesyl diphosphate + H2O = Fe(II)-heme o + diphosphate. It participates in porphyrin-containing compound metabolism; heme O biosynthesis; heme O from protoheme: step 1/1. Converts heme B (protoheme IX) to heme O by substitution of the vinyl group on carbon 2 of heme B porphyrin ring with a hydroxyethyl farnesyl side group. The sequence is that of Protoheme IX farnesyltransferase from Sulfurisphaera tokodaii (strain DSM 16993 / JCM 10545 / NBRC 100140 / 7) (Sulfolobus tokodaii).